The primary structure comprises 197 residues: ATP-dependent Clp protease proteolytic subunit (197 aa).

Catalysis depends on Ser-102, which acts as the Nucleophile. His-127 is an active-site residue.

This sequence belongs to the peptidase S14 family. In terms of assembly, fourteen ClpP subunits assemble into 2 heptameric rings which stack back to back to give a disk-like structure with a central cavity, resembling the structure of eukaryotic proteasomes.

The protein localises to the cytoplasm. The enzyme catalyses Hydrolysis of proteins to small peptides in the presence of ATP and magnesium. alpha-casein is the usual test substrate. In the absence of ATP, only oligopeptides shorter than five residues are hydrolyzed (such as succinyl-Leu-Tyr-|-NHMec, and Leu-Tyr-Leu-|-Tyr-Trp, in which cleavage of the -Tyr-|-Leu- and -Tyr-|-Trp bonds also occurs).. In terms of biological role, cleaves peptides in various proteins in a process that requires ATP hydrolysis. Has a chymotrypsin-like activity. Plays a major role in the degradation of misfolded proteins. The protein is ATP-dependent Clp protease proteolytic subunit of Buchnera aphidicola subsp. Schizaphis graminum (strain Sg).